The primary structure comprises 278 residues: Membrane protein insertase YidC 2 (278 aa).

Positions 1–18 (MHKRLFITLLGFIILLAG) are cleaved as a signal peptide. Cys19 carries N-palmitoyl cysteine lipidation. Residue Cys19 is the site of S-diacylglycerol cysteine attachment. 4 helical membrane-spanning segments follow: residues 55–75 (GFAI…FMLI), 132–152 (MLGC…YMSL), 176–196 (LIMT…NSIH), and 224–244 (AAAL…QMHF).

Belongs to the OXA1/ALB3/YidC family. Type 2 subfamily.

Its subcellular location is the cell membrane. Required for the insertion and/or proper folding and/or complex formation of integral membrane proteins into the membrane. Involved in integration of membrane proteins that insert both dependently and independently of the Sec translocase complex, as well as at least some lipoproteins. The sequence is that of Membrane protein insertase YidC 2 from Staphylococcus epidermidis (strain ATCC 12228 / FDA PCI 1200).